The primary structure comprises 390 residues: GTPase Obg (390 aa).

In terms of domain architecture, Obg spans 1–159; that stretch reads MKFIDESLIR…RDLLLELMLL (159 aa). In terms of domain architecture, OBG-type G spans 160–333; the sequence is ADVGMLGLPN…LCRDIMDFII (174 aa). Residues 166–173, 191–195, 213–216, 283–286, and 314–316 contribute to the GTP site; these read GLPNAGKS, FTTLV, DIPG, NKID, and SAA. Mg(2+) contacts are provided by serine 173 and threonine 193.

The protein belongs to the TRAFAC class OBG-HflX-like GTPase superfamily. OBG GTPase family. In terms of assembly, monomer. Mg(2+) is required as a cofactor.

It localises to the cytoplasm. In terms of biological role, an essential GTPase which binds GTP, GDP and possibly (p)ppGpp with moderate affinity, with high nucleotide exchange rates and a fairly low GTP hydrolysis rate. Plays a role in control of the cell cycle, stress response, ribosome biogenesis and in those bacteria that undergo differentiation, in morphogenesis control. The sequence is that of GTPase Obg from Haemophilus influenzae (strain 86-028NP).